Consider the following 246-residue polypeptide: Proteasome subunit alpha type-6-A (246 aa).

Belongs to the peptidase T1A family. As to quaternary structure, component of the 20S core complex of the 26S proteasome. The 26S proteasome is composed of a core protease (CP), known as the 20S proteasome, capped at one or both ends by the 19S regulatory particle (RP/PA700). The 20S proteasome core is composed of 28 subunits that are arranged in four stacked rings, resulting in a barrel-shaped structure. The two end rings are each formed by seven alpha subunits, and the two central rings are each formed by seven beta subunits. The catalytic chamber with the active sites is on the inside of the barrel. As to expression, ubiquitous low levels, higher expression in siliques and flowers.

The protein resides in the cytoplasm. Its subcellular location is the nucleus. Functionally, the proteasome is a multicatalytic proteinase complex which is characterized by its ability to cleave peptides with Arg, Phe, Tyr, Leu, and Glu adjacent to the leaving group at neutral or slightly basic pH. The proteasome has an ATP-dependent proteolytic activity. This is Proteasome subunit alpha type-6-A (PAA1) from Arabidopsis thaliana (Mouse-ear cress).